We begin with the raw amino-acid sequence, 238 residues long: Trypsin-3 (238 aa).

A signal peptide spans 1–7; sequence FAVAFAA. The propeptide at 8 to 15 is activation peptide; sequence PIDDEDDK. A Peptidase S1 domain is found at 16 to 236; sequence IVGGYECRKN…YRSWISSTMS (221 aa). Disulfide bonds link C22–C152, C40–C56, C124–C225, C131–C198, C163–C177, and C188–C212. H55 functions as the Charge relay system in the catalytic mechanism. Ca(2+) contacts are provided by E67, N69, V72, and E77. Residue D99 is the Charge relay system of the active site. The active-site Charge relay system is S192.

Belongs to the peptidase S1 family. It depends on Ca(2+) as a cofactor.

The protein resides in the secreted. The protein localises to the extracellular space. The catalysed reaction is Preferential cleavage: Arg-|-Xaa, Lys-|-Xaa.. The chain is Trypsin-3 from Salmo salar (Atlantic salmon).